The following is a 163-amino-acid chain: Crossover junction endodeoxyribonuclease RuvC (163 aa).

Residues Asp9, Glu76, and Asp148 contribute to the active site. Residues Asp9, Glu76, and Asp148 each contribute to the Mg(2+) site.

This sequence belongs to the RuvC family. As to quaternary structure, homodimer which binds Holliday junction (HJ) DNA. The HJ becomes 2-fold symmetrical on binding to RuvC with unstacked arms; it has a different conformation from HJ DNA in complex with RuvA. In the full resolvosome a probable DNA-RuvA(4)-RuvB(12)-RuvC(2) complex forms which resolves the HJ. The cofactor is Mg(2+).

It is found in the cytoplasm. The enzyme catalyses Endonucleolytic cleavage at a junction such as a reciprocal single-stranded crossover between two homologous DNA duplexes (Holliday junction).. In terms of biological role, the RuvA-RuvB-RuvC complex processes Holliday junction (HJ) DNA during genetic recombination and DNA repair. Endonuclease that resolves HJ intermediates. Cleaves cruciform DNA by making single-stranded nicks across the HJ at symmetrical positions within the homologous arms, yielding a 5'-phosphate and a 3'-hydroxyl group; requires a central core of homology in the junction. The consensus cleavage sequence is 5'-(A/T)TT(C/G)-3'. Cleavage occurs on the 3'-side of the TT dinucleotide at the point of strand exchange. HJ branch migration catalyzed by RuvA-RuvB allows RuvC to scan DNA until it finds its consensus sequence, where it cleaves and resolves the cruciform DNA. The sequence is that of Crossover junction endodeoxyribonuclease RuvC from Nostoc sp. (strain PCC 7120 / SAG 25.82 / UTEX 2576).